The sequence spans 500 residues: Keratin, type II cuticular Hb1 (500 aa).

The head stretch occupies residues 1 to 106 (MTCGSGFRGR…PNAQCVKQEE (106 aa)). Residues 106–417 (EKEQIKCLNN…RLLEGEEQRL (312 aa)) form the IF rod domain. The segment at 107 to 141 (KEQIKCLNNRFAAFIDKVRFLEQQNKLLETKLQFY) is coil 1A. The linker 1 stretch occupies residues 142–151 (QNRQCCESNL). The segment at 152-252 (EPLFNGYIET…YEEEIRVLQA (101 aa)) is coil 1B. Lysine 212 participates in a covalent cross-link: Glycyl lysine isopeptide (Lys-Gly) (interchain with G-Cter in SUMO1). The linker 12 stretch occupies residues 253-269 (HISDTSVIVKMDNSRDL). A coil 2 region spans residues 270 to 413 (NMDNIVAEIK…ATYRRLLEGE (144 aa)). The tail stretch occupies residues 414-500 (EQRLCEGVGS…GSCASVCRKC (87 aa)).

It belongs to the intermediate filament family. Heterotetramer of two type I and two type II keratins.

This is Keratin, type II cuticular Hb1 from Bos taurus (Bovine).